We begin with the raw amino-acid sequence, 700 residues long: Transketolase (700 aa).

His-45 serves as a coordination point for substrate. Residues Thr-48, His-85, and 133 to 135 (GPL) contribute to the thiamine diphosphate site. Asp-177 lines the Mg(2+) pocket. Residues Gly-178 and Asn-207 each contribute to the thiamine diphosphate site. Residues Asn-207 and Ile-209 each contribute to the Mg(2+) site. Residues His-283, Arg-378, and Ser-405 each coordinate substrate. Residue His-283 participates in thiamine diphosphate binding. Glu-441 acts as the Proton donor in catalysis. Position 467 (Phe-467) interacts with thiamine diphosphate. Substrate contacts are provided by His-491, Asp-499, and Arg-552.

The protein belongs to the transketolase family. In terms of assembly, homodimer. The cofactor is Mg(2+). Requires Ca(2+) as cofactor. Mn(2+) is required as a cofactor. Co(2+) serves as cofactor. It depends on thiamine diphosphate as a cofactor.

The enzyme catalyses D-sedoheptulose 7-phosphate + D-glyceraldehyde 3-phosphate = aldehydo-D-ribose 5-phosphate + D-xylulose 5-phosphate. Its function is as follows. Catalyzes the transfer of a two-carbon ketol group from a ketose donor to an aldose acceptor, via a covalent intermediate with the cofactor thiamine pyrophosphate. The protein is Transketolase (tkt) of Mycobacterium bovis (strain ATCC BAA-935 / AF2122/97).